A 428-amino-acid chain; its full sequence is Lupus La protein homolog A (428 aa).

The HTH La-type RNA-binding domain maps to 7 to 99 (KEQKLDSDTK…RRSPAKPLPE (93 aa)). An RRM domain is found at 111–203 (KSVYIKGFPT…EERKLNKSEE (93 aa)). Disordered stretches follow at residues 187–223 (EYHA…DAER) and 323–428 (QESF…VGDQ). Short sequence motifs (nuclear localization signal) lie at residues 196-212 (RKLN…QVKK) and 316-332 (KKIL…RKGR). The 123-residue stretch at 227-349 (EERVGSLLKF…KGRGGKGNDS (123 aa)) folds into the xRRM domain. Composition is skewed to basic residues over residues 328 to 343 (KRKG…KGRG) and 352 to 361 (RKRTQFQGKK). Over residues 366–377 (SSDDEDDMEESE) the composition is skewed to acidic residues. Basic and acidic residues predominate over residues 406–428 (RSLDDKAEDGPAVKQSKTEVGDQ).

Phosphorylated.

The protein resides in the nucleus. In terms of biological role, la protein plays a role in the transcription of RNA polymerase III. It is most probably a transcription termination factor. Binds to the 3' termini of virtually all nascent polymerase III transcripts. The chain is Lupus La protein homolog A (ssb-a) from Xenopus laevis (African clawed frog).